Reading from the N-terminus, the 154-residue chain is Interleukin-7 (154 aa).

A signal peptide spans 1 to 25 (MFHVSFRYIFGIPPLILVLLPVTSS). Intrachain disulfides connect Cys-27/Cys-145, Cys-58/Cys-133, and Cys-71/Cys-116. N-linked (GlcNAc...) asparagine glycosylation is found at Asn-94 and Asn-115.

Belongs to the IL-7/IL-9 family. As to quaternary structure, interacts with IL7R and CSF2RG. Post-translationally, three disulfide bonds are present.

The protein localises to the secreted. Hematopoietic cytokine that plays an essential role in the development, expansion, and survival of naive and memory T-cells and B-cells thereby regulating the number of mature lymphocytes and maintaining lymphoid homeostasis. Mechanistically, exerts its biological effects through a receptor composed of IL7RA subunit and the cytokine receptor common subunit gamma/CSF2RG. Binding to the receptor leads to activation of various kinases including JAK1 or JAK3 depending on the cell type and subsequently propagation of signals through activation of several downstream signaling pathways including the PI3K/Akt/mTOR or the JAK-STAT5. The chain is Interleukin-7 (Il7) from Mus musculus (Mouse).